Consider the following 36-residue polypeptide: F420-dependent NADP reductase (36 aa).

An NADP(+)-binding site is contributed by 9–12 (TGNI).

Belongs to the F420-dependent NADP reductase family. In terms of assembly, homotetramer.

It carries out the reaction reduced coenzyme F420-(gamma-L-Glu)(n) + NADP(+) = oxidized coenzyme F420-(gamma-L-Glu)(n) + NADPH + 2 H(+). In terms of biological role, catalyzes the reduction of NADP(+) with F420H(2) via hydride transfer, and the reverse reaction, i.e. the reduction of F420 with NADPH. In M.organophilum, an alcohol-fermenting methanogen containing an NADP-dependent alcohol dehydrogenase, is probably involved in the regeneration of F420H(2) required for CO(2) reduction to methane. Thus, during growth on alcohol and CO(2), the F420-dependent NADP reductase probably has the function of coupling the NADP-dependent oxidation of the alcohol to the aldehyde with the F420-dependent reduction of CO(2) to methane. The polypeptide is F420-dependent NADP reductase (fno) (Methanogenium organophilum).